We begin with the raw amino-acid sequence, 452 residues long: CCA-adding enzyme (452 aa).

2 residues coordinate ATP: Ser-54 and Arg-57. Residues Ser-54 and Arg-57 each coordinate CTP. Mg(2+)-binding residues include Asp-66, Asp-68, and Asp-117. 3 residues coordinate ATP: His-140, Lys-160, and Tyr-169. His-140, Lys-160, and Tyr-169 together coordinate CTP.

Belongs to the tRNA nucleotidyltransferase/poly(A) polymerase family. Archaeal CCA-adding enzyme subfamily. In terms of assembly, homodimer. Mg(2+) serves as cofactor.

It carries out the reaction a tRNA precursor + 2 CTP + ATP = a tRNA with a 3' CCA end + 3 diphosphate. The catalysed reaction is a tRNA with a 3' CCA end + 2 CTP + ATP = a tRNA with a 3' CCACCA end + 3 diphosphate. Catalyzes the addition and repair of the essential 3'-terminal CCA sequence in tRNAs without using a nucleic acid template. Adds these three nucleotides in the order of C, C, and A to the tRNA nucleotide-73, using CTP and ATP as substrates and producing inorganic pyrophosphate. tRNA 3'-terminal CCA addition is required both for tRNA processing and repair. Also involved in tRNA surveillance by mediating tandem CCA addition to generate a CCACCA at the 3' terminus of unstable tRNAs. While stable tRNAs receive only 3'-terminal CCA, unstable tRNAs are marked with CCACCA and rapidly degraded. The protein is CCA-adding enzyme of Halobacterium salinarum (strain ATCC 29341 / DSM 671 / R1).